The primary structure comprises 244 residues: 5-oxoprolinase subunit A (244 aa).

The protein belongs to the LamB/PxpA family. Forms a complex composed of PxpA, PxpB and PxpC.

It carries out the reaction 5-oxo-L-proline + ATP + 2 H2O = L-glutamate + ADP + phosphate + H(+). In terms of biological role, catalyzes the cleavage of 5-oxoproline to form L-glutamate coupled to the hydrolysis of ATP to ADP and inorganic phosphate. The chain is 5-oxoprolinase subunit A from Salmonella agona (strain SL483).